The chain runs to 128 residues: Cytochrome c-type biogenesis protein CcmE (128 aa).

The Cytoplasmic portion of the chain corresponds to 1 to 8 (MQKIVRNR). The chain crosses the membrane as a helical; Signal-anchor for type II membrane protein span at residues 9–29 (LIKIIICFCSACLGISIILYN). Residues 30 to 128 (LEKNIIFFFP…KHDENYRPPS (99 aa)) lie on the Periplasmic side of the membrane. Heme is bound by residues His120 and Tyr124.

It belongs to the CcmE/CycJ family.

The protein localises to the cell inner membrane. Heme chaperone required for the biogenesis of c-type cytochromes. Transiently binds heme delivered by CcmC and transfers the heme to apo-cytochromes in a process facilitated by CcmF and CcmH. This Rickettsia prowazekii (strain Madrid E) protein is Cytochrome c-type biogenesis protein CcmE.